The chain runs to 231 residues: Cysteine-rich venom protein VAR10 (231 aa).

An N-terminal signal peptide occupies residues 1–19 (MILLKLYLTLAAILCQSRG). One can recognise an SCP domain in the interval 41–169 (NKHNDLRRTV…SLKYFQVCQY (129 aa)). Intrachain disulfides connect Cys-77–Cys-156, Cys-95–Cys-170, Cys-151–Cys-167, Cys-189–Cys-196, and Cys-214–Cys-231. The 27-residue stretch at 205 to 231 (CAYNDDYTSCPDLTKQVGCHHPVTANC) folds into the ShKT domain.

This sequence belongs to the CRISP family. Contains 8 disulfide bonds. As to expression, expressed by the venom gland.

It is found in the secreted. In terms of biological role, blocks ryanodine receptors, and potassium channels. This Varanus varius (Lace monitor lizard) protein is Cysteine-rich venom protein VAR10.